Here is an 809-residue protein sequence, read N- to C-terminus: WD repeat protein iqw1 (809 aa).

5 WD repeats span residues 43-82 (GHTGCVNTLDWSADGEFLLSGSDDTRLIVWDVFNEYKPRH), 87-128 (GHVQ…EGGM), 141-180 (CALDSVKNIVPCDNGHTFLVCSEDGTARQYDIREPHVCNQ), 193-233 (PYRI…KSFR), and 241-295 (SPEK…LFHV). Residues 599–644 (SMYTGHSDLNDDDDDYQDEESYSYASDDDDESDEDSDEGPTLLSLR) are disordered. A compositionally biased stretch (acidic residues) spans 608–636 (NDDDDDYQDEESYSYASDDDDESDEDSDE). WD repeat units follow at residues 668-708 (CNVE…ILAI) and 711-750 (GDSEAVNVIEGHPRCPTLAVSGIDSTVKIFNTENTPPSGC).

As to quaternary structure, interacts with ddb1.

It localises to the cytoplasm. In terms of biological role, ligand-dependent coactivator of nuclear receptors that may function as a substrate receptor for CUL4-DDB1 E3 ubiquitin-protein ligase complex. The chain is WD repeat protein iqw1 (iqw1) from Schizosaccharomyces pombe (strain 972 / ATCC 24843) (Fission yeast).